The primary structure comprises 285 residues: MLFNYQSLLVGVSLISQALSAPILESRATADAAAFPDLHRAAKLSSAAYTGCIGKAFDVTITKRIYDLVTDTNGFVGYSTEKKTIAVIMRGSTTITDFVNDIDIALITPELSGVTFPSDVKIMRGVHRPWSAVHDTIITEVKALIAKYPDYTLEAVGHSLGGALTSIAHVALAQNFPDKSLVSNALNAFPIGNQAWADFGTAQAGTFNRGNNVLDGVPNMYSSPLVNFKHYGTEYYSSGTEASTVKCEGQRDKSCSAGNGMYAVTPGHIASFGVVMLTAGCGYLS.

Residues 1-20 (MLFNYQSLLVGVSLISQALS) form the signal peptide. The active-site Nucleophile is S159. Catalysis depends on charge relay system residues D215 and H268.

It belongs to the AB hydrolase superfamily. FaeA family.

The protein resides in the secreted. The catalysed reaction is a triacylglycerol + H2O = a diacylglycerol + a fatty acid + H(+). Functionally, secreted alkaline lipase that hydrolyzes acylglycerol lipids such as triacylglycerols and consequently releases free fatty acid. Is able to hydrolyze tributyrin (1,2,3-tributyryl-glycerin). This is Secreted alkaline triacylglycerol lipase from Penicillium cyclopium.